We begin with the raw amino-acid sequence, 515 residues long: Spermatogenesis-associated protein 2 (515 aa).

Positions 78–150 (ALHCAFSMLE…VYKLKELVES (73 aa)) constitute a PUB domain. Residues 321–338 (TYFSTQDDVDLYTDSEPR) carry the PIM motif motif. Positions 429–452 (GHQTQGLDRLAPVHSKPKPSTTAT) are disordered.

The protein belongs to the SPATA2 family. In terms of assembly, interacts (via the PIM motif) with RNF31/HOIP (via the PUB domain); the interaction is direct. Interacts (via the PUB domain) with CYLD; the interaction is direct. In terms of tissue distribution, widely expressed, with highest expression in testis, lung and intestine, and lower expression in brain, heart and spleen. Present at high level in Sertoli cells: expressed from stage I to stage XII of the testis seminiferous epithelium (at protein level).

The protein resides in the cytoplasm. Its subcellular location is the nucleus. Functionally, bridging factor that mediates the recruitment of CYLD to the LUBAC complex, thereby regulating TNF-alpha-induced necroptosis. Acts as a direct binding intermediate that bridges RNF31/HOIP, the catalytic subunit of the LUBAC complex, and the deubiquitinase (CYLD), thereby recruiting CYLD to the TNF-R1 signaling complex (TNF-RSC). Required to activate the 'Met-1'- (linear) and 'Lys-63'-linked deubiquitinase activities of CYLD. Controls the kinase activity of RIPK1 and TNF-alpha-induced necroptosis by promoting 'Met-1'-linked deubiquitination of RIPK1 by CYLD. In Mus musculus (Mouse), this protein is Spermatogenesis-associated protein 2.